Consider the following 210-residue polypeptide: Protein-methionine-sulfoxide reductase heme-binding subunit MsrQ (210 aa).

Transmembrane regions (helical) follow at residues 8–28 (LAVF…AWIF), 37–57 (VLVE…LSMT), 75–95 (LGLW…LFIL), 110–130 (PYII…VTSN), 147–167 (IIYV…RADL), and 169–189 (EWAL…PVFA).

This sequence belongs to the MsrQ family. As to quaternary structure, heterodimer of a catalytic subunit (MsrP) and a heme-binding subunit (MsrQ). Requires FMN as cofactor. It depends on heme b as a cofactor.

The protein resides in the cell inner membrane. Its function is as follows. Part of the MsrPQ system that repairs oxidized periplasmic proteins containing methionine sulfoxide residues (Met-O), using respiratory chain electrons. Thus protects these proteins from oxidative-stress damage caused by reactive species of oxygen and chlorine generated by the host defense mechanisms. MsrPQ is essential for the maintenance of envelope integrity under bleach stress, rescuing a wide series of structurally unrelated periplasmic proteins from methionine oxidation. MsrQ provides electrons for reduction to the reductase catalytic subunit MsrP, using the quinone pool of the respiratory chain. This chain is Protein-methionine-sulfoxide reductase heme-binding subunit MsrQ, found in Pseudomonas syringae pv. syringae (strain B728a).